A 129-amino-acid polypeptide reads, in one-letter code: L-ectoine synthase (129 aa).

This sequence belongs to the ectoine synthase family.

It carries out the reaction (2S)-4-acetamido-2-aminobutanoate = L-ectoine + H2O. Its pathway is amine and polyamine biosynthesis; ectoine biosynthesis; L-ectoine from L-aspartate 4-semialdehyde: step 3/3. Its function is as follows. Catalyzes the circularization of gamma-N-acetyl-alpha,gamma-diaminobutyric acid (ADABA) to ectoine (1,4,5,6-tetrahydro-2-methyl-4-pyrimidine carboxylic acid), which is an excellent osmoprotectant. The polypeptide is L-ectoine synthase (Desulfosudis oleivorans (strain DSM 6200 / JCM 39069 / Hxd3) (Desulfococcus oleovorans)).